Consider the following 758-residue polypeptide: Calcium up-regulated protein E (758 aa).

The interval 1–22 (MINIEDISKSSNQSEEKQLKST) is disordered. Ricin B-type lectin domains follow at residues 25 to 145 (KPKY…WTTF) and 156 to 288 (GYFQ…WIAN).

This sequence belongs to the cup family.

The protein resides in the cytoplasm. It localises to the membrane. May play an important role in stabilizing and/or regulating the cell membrane during Ca(2+) stress or certain stages of development. In Dictyostelium discoideum (Social amoeba), this protein is Calcium up-regulated protein E (cupE).